Consider the following 484-residue polypeptide: Cytochrome P450 monooxygenase poxD (484 aa).

A helical transmembrane segment spans residues 2–24 (VSPVVLATTAMIVVFLLAQRYLS). Cysteine 429 is a binding site for heme.

It belongs to the cytochrome P450 family. It depends on heme as a cofactor.

It localises to the membrane. It participates in secondary metabolite biosynthesis. In terms of biological role, cytochrome P450 monooxygenase; part of the gene cluster that mediates the biosynthesis of oxaleimides, cytotoxic compounds containing an unusual disubstituted succinimide moiety. The first step of the pathway is provided by the HR-PKS poxF that serves in a new mode of collaborative biosynthesis with the PKS-NRPS poxE, by providing the olefin containing amino acid substrate via the synthesis of an ACP-bound dec-4-enoate. The cytochrome P450 monooxygenase poxM-catalyzed oxidation at the alpha-position creates the enzyme-bound 2-hydroxydec-4-enoyl-ACP thioester, which may be prone to spontaneous hydrolysis to yield 2-hydroxydec-4-enoic acid due to increased electrophilicity of the carbonyl. 2-hydroxydec-4-enoic acid can then be further oxidized by poxM to yield the alpha-ketoacid 2-oxodec-4-enoicacid, which is reductively aminated by the aminotransferase poxL to yield (S,E)-2-aminodec-4-enoic acid. The Hybrid PKS-NRPS synthetase poxE then performs condensation between the octaketide product of its PKS modules and the amino group of (S,E)-2-aminodec-4-enoic acid which is activated and incorporated by the adenylation domain. The resulting aminoacyl product can be cyclized by the Diels-Alderase PoxQ and reductively released by the reductive (R) domain of poxE to yield an aldehyde intermediate. The released aldehyde is then substrate for a Knoevenagel condensation by the hydrolyase poxO followed by an oxidation at the 5-position of the pyrrolidone ring. The presence of the olefin from the amino acid building block allows for migration of the substituted allyl group to occur. This allylic transposition reaction takes place in a conjugate addition, semipinacol-like fashion to yield a succinimide intermediate. Iterative two-electron oxidations of the C7 methyl of the succinimide intermediate to the carboxylic acid can be catalyzed by one of two remaining cytochrome P450 monooxygenasess poxC or poxD to yield oxaleimide A. Subsequent oxidation yields the maleimide scaffold oxaleimide I. Both oxaleimide A and oxaleimide I can undergo oxidative modifications in the decalin ring to yield the series of products oxaleimides B to H. The protein is Cytochrome P450 monooxygenase poxD of Penicillium oxalicum.